We begin with the raw amino-acid sequence, 574 residues long: 2-succinyl-5-enolpyruvyl-6-hydroxy-3-cyclohexene-1-carboxylate synthase (574 aa).

The protein belongs to the TPP enzyme family. MenD subfamily. As to quaternary structure, homodimer. Requires Mg(2+) as cofactor. It depends on Mn(2+) as a cofactor. Thiamine diphosphate serves as cofactor.

It catalyses the reaction isochorismate + 2-oxoglutarate + H(+) = 5-enolpyruvoyl-6-hydroxy-2-succinyl-cyclohex-3-ene-1-carboxylate + CO2. It functions in the pathway quinol/quinone metabolism; 1,4-dihydroxy-2-naphthoate biosynthesis; 1,4-dihydroxy-2-naphthoate from chorismate: step 2/7. The protein operates within cofactor biosynthesis; phylloquinone biosynthesis. Catalyzes the thiamine diphosphate-dependent decarboxylation of 2-oxoglutarate and the subsequent addition of the resulting succinic semialdehyde-thiamine pyrophosphate anion to isochorismate to yield 2-succinyl-5-enolpyruvyl-6-hydroxy-3-cyclohexene-1-carboxylate (SEPHCHC). The polypeptide is 2-succinyl-5-enolpyruvyl-6-hydroxy-3-cyclohexene-1-carboxylate synthase (Synechococcus sp. (strain RCC307)).